Consider the following 169-residue polypeptide: Ubiquitin-fold modifier-conjugating enzyme 1 (169 aa).

Cys116 serves as the catalytic Glycyl thioester intermediate.

Belongs to the ubiquitin-conjugating enzyme family. UFC1 subfamily.

Functionally, E2-like enzyme which forms an intermediate with UFM1 via a thioester linkage. This chain is Ubiquitin-fold modifier-conjugating enzyme 1, found in Nematostella vectensis (Starlet sea anemone).